We begin with the raw amino-acid sequence, 723 residues long: Tripartite motif-containing protein 42 (723 aa).

The RING-type zinc finger occupies 146–192 (CPMCSRLRLHSFMLPCNHSLCEKCLRQLQKHAEVTENFFILICPVCD). 2 consecutive B box-type zinc fingers follow at residues 235-280 (PILC…FVDT) and 285-326 (QDEK…TISL). 4 residues coordinate Zn(2+): C290, H293, C313, and H318. The stretch at 382-407 (KLRSILQEKEKIIMEQIENLEVSRQK) forms a coiled coil. The COS domain maps to 434–492 (LKETGQVAFLQSAKILVDQIEDGIQTTYRPDPQLRLHSINYVPLDFVELSSAIHELFPT). A Fibronectin type-III domain is found at 603–701 (TPGPIVIYQT…DICKVVTPDG (99 aa)).

This sequence belongs to the TRIM/RBCC family.

In Homo sapiens (Human), this protein is Tripartite motif-containing protein 42 (TRIM42).